A 570-amino-acid chain; its full sequence is Sulfite reductase [NADPH] hemoprotein beta-component (570 aa).

Cys434, Cys440, Cys479, and Cys483 together coordinate [4Fe-4S] cluster. Cys483 serves as a coordination point for siroheme.

It belongs to the nitrite and sulfite reductase 4Fe-4S domain family. In terms of assembly, alpha(8)-beta(8). The alpha component is a flavoprotein, the beta component is a hemoprotein. Requires siroheme as cofactor. The cofactor is [4Fe-4S] cluster.

It catalyses the reaction hydrogen sulfide + 3 NADP(+) + 3 H2O = sulfite + 3 NADPH + 4 H(+). The protein operates within sulfur metabolism; hydrogen sulfide biosynthesis; hydrogen sulfide from sulfite (NADPH route): step 1/1. Its function is as follows. Component of the sulfite reductase complex that catalyzes the 6-electron reduction of sulfite to sulfide. This is one of several activities required for the biosynthesis of L-cysteine from sulfate. This is Sulfite reductase [NADPH] hemoprotein beta-component from Escherichia coli (strain SMS-3-5 / SECEC).